We begin with the raw amino-acid sequence, 179 residues long: Large ribosomal subunit protein uL5 (179 aa).

This sequence belongs to the universal ribosomal protein uL5 family. As to quaternary structure, part of the 50S ribosomal subunit; part of the 5S rRNA/L5/L18/L25 subcomplex. Contacts the 5S rRNA and the P site tRNA. Forms a bridge to the 30S subunit in the 70S ribosome.

Its function is as follows. This is one of the proteins that bind and probably mediate the attachment of the 5S RNA into the large ribosomal subunit, where it forms part of the central protuberance. In the 70S ribosome it contacts protein S13 of the 30S subunit (bridge B1b), connecting the 2 subunits; this bridge is implicated in subunit movement. Contacts the P site tRNA; the 5S rRNA and some of its associated proteins might help stabilize positioning of ribosome-bound tRNAs. The polypeptide is Large ribosomal subunit protein uL5 (Xylella fastidiosa (strain M23)).